A 1291-amino-acid polypeptide reads, in one-letter code: MSGPLEGADGGGDPRPGEPFCPGGVPSPGAPQHRPCPGPSLADDTDANSNGSSGNESNGPESRGASQRSSHSSSSGNGKDSALLETTESSKSTNSQSPSPPSSSIAYSLLSASSEQDNPSTSGCSSEQSARARTQKELMTALRELKLRLPPERRGKGRSGTLATLQYALACVKQVQANQEYYQQWSLEEGEPCAMDMSTYTLEELEHITSEYTLRNQDTFSVAVSFLTGRIVYISEQAGVLLRCKRDVFRGARFSELLAPQDVGVFYGSTTPSRLPTWGTGTSAGSGLKDFTQEKSVFCRIRGGPDRDPGPRYQPFRLTPYVTKIRVSDGAPAQPCCLLIAERIHSGYEAPRIPPDKRIFTTRHTPSCLFQDVDERAAPLLGYLPQDLLGAPVLLFLHPEDRPLMLAIHKKILQLAGQPFDHSPIRFCARNGEYVTMDTSWAGFVHPWSRKVAFVLGRHKVRTAPLNEDVFTPPAPSPAPSLDSDIQELSEQIHRLLLQPVHSSSPTGLCGVGPLMSPGPLHSPGSSSDSNGGDAEGPGPPAPVTFQQICKDVHLVKHQGQQLFIESRAKPPPRPRLLATGTFKAKVLPCQSPNPELEVAPVPDQASLALAPEEPERKETSGCSYQQINCLDSILRYLESCNIPSTTKRKCASSSSYTASSASDDDKQRAGPVPVGAKKDPSSAMLSGEGATPRKEPVVGGTLSPLALANKAESVVSVTSQCSFSSTIVHVGDKKPPESDIIMMEDLPGLAPGPAPSPAPSPTVAPDPTPDAYRPVGLTKAVLSLHTQKEEQAFLNRFRDLGRLRGLDTSSVAPSAPGCHHGPIPPGRRHHCRSKAKRSRHHHHQTPRPETPCYVSHPSPVPSSGPWPPPPATTPFPAMVQPYPLPVFSPRGGPQPLPPAPTSVSPATFPSPLVTPMVALVLPNYLFPTPPSYPYGVSQAPVEGPPTPASHSPSPSLPPPPLSPPHRPDSPLFNSRCSSPLQLNLLQLEESPRTEGGAAAGGPGSSAGPLPPSEETAEPEARLVEVTESSNQDALSGSSDLLELLLQEDSRSGTGSAASGSLGSGLGSGSGSGSHEGGSTSASITRSSQSSHTSKYFGSIDSSEAEAGAARARTEPGDQVIKCVLQDPIWLLMANADQRVMMTYQVPSRDAASVLKQDRERLRAMQKQQPRFSEDQRRELGAVHSWVRKGQLPRALDVTACVDCGSSVQDPGHSDDPLFSELDGLGLEPMEEGGGEGGGCGVGGGGGDGGEEAQTQIGAKGSSSQDSAMEEEEQGGGSSSPALPAEENSTS.

The disordered stretch occupies residues 1-134 (MSGPLEGADG…SSEQSARART (134 aa)). An interaction with BTRC region spans residues 1 to 151 (MSGPLEGADG…LRELKLRLPP (151 aa)). The span at 48-115 (NSNGSSGNES…AYSLLSASSE (68 aa)) shows a compositional bias: low complexity. Positions 116-132 (QDNPSTSGCSSEQSARA) are enriched in polar residues. Position 121 is a phosphothreonine; by CSNK1E (threonine 121). A phosphoserine; by CSNK1E mark is found at serine 122 and serine 126. Residues 138 to 147 (LMTALRELKL) carry the Nuclear export signal 1 motif. 2 consecutive PAS domains span residues 208–275 (ITSE…PSRL) and 348–414 (YEAP…KILQ). Positions 422–465 (HSPIRFCARNGEYVTMDTSWAGFVHPWSRKVAFVLGRHKVRTAP) constitute a PAC domain. A Nuclear export signal 2 motif is present at residues 489 to 498 (LSEQIHRLLL). 2 disordered regions span residues 508–544 (GLCG…PAPV) and 647–698 (TKRK…KEPV). Composition is skewed to low complexity over residues 513 to 533 (GPLM…SNGG) and 652 to 662 (ASSSSYTASSA). The tract at residues 596–815 (ELEVAPVPDQ…GLDTSSVAPS (220 aa)) is required for phosphorylation by CSNK1E. Phosphoserine occurs at positions 661, 663, and 704. Disordered regions lie at residues 749–772 (GLAP…TPDA), 809–873 (TSSV…PPAT), and 938–1037 (SQAP…ALSG). Positions 751–769 (APGPAPSPAPSPTVAPDPT) are enriched in pro residues. Serine 815 bears the Phosphoserine mark. A Nuclear localization signal motif is present at residues 824 to 840 (IPPGRRHHCRSKAKRSR). Residues 827–846 (GRRHHCRSKAKRSRHHHHQT) show a composition bias toward basic residues. Composition is skewed to pro residues over residues 859–873 (SPVP…PPAT) and 955–965 (PSLPPPPLSPP). Positions 973–985 (FNSRCSSPLQLNL) are enriched in polar residues. Serine 978 and serine 979 each carry phosphoserine. The Nuclear export signal 3 motif lies at 981–988 (LQLNLLQL). An LXXLL motif is present at residues 1042 to 1046 (LELLL). Low complexity predominate over residues 1051–1061 (RSGTGSAASGS). 2 disordered regions span residues 1051-1099 (RSGT…YFGS) and 1207-1291 (SVQD…NSTS). The span at 1062 to 1076 (LGSGLGSGSGSGSHE) shows a compositional bias: gly residues. The segment covering 1077 to 1094 (GGSTSASITRSSQSSHTS) has biased composition (low complexity). Residues 1148-1291 (SRDAASVLKQ…ALPAEENSTS (144 aa)) are CRY binding domain. Gly residues predominate over residues 1235–1248 (GEGGGCGVGGGGGD). Polar residues predominate over residues 1253–1267 (AQTQIGAKGSSSQDS).

Homodimer. Component of the circadian core oscillator, which includes the CRY proteins, CLOCK or NPAS2, BMAL1 or BMAL2, CSNK1D and/or CSNK1E, TIMELESS, and the PER proteins. Interacts directly with TIMELESS. Interacts directly with PER2, PER3, CRY1 and CRY2. Interacts with BMAL1 and CLOCK. Interacts with GPRASP1. Interacts (phosphorylated) with BTRC and FBXW11; the interactions trigger proteasomal degradation. Interacts with NONO and SFPQ. Interacts with WDR5. Interacts with U2AF1L4 (Isoform 3). Interacts with USP2. Interacts with HNF4A. In terms of processing, phosphorylated on serine residues by CSNK1D, CSNK1E and probably also by CSNK1G2. Phosphorylation by CSNK1D or CSNK1E promotes nuclear location of PER proteins as well as ubiquitination and subsequent degradation. May be dephosphorylated by PP1. Post-translationally, ubiquitinated; requires phosphorylation by CSNK1E and interaction with BTRC and FBXW11. Deubiquitinated by USP2. In brain, highest expression is observed in the SCN. Highly expressed in the pyramidal cell layer of the piriform cortex, the periventricular part of the caudate-putamen, many thalamic nuclei, and the granular layer of the cerebellar cortex. Weaker expression is detected in most area of the brain, including cortical and non cortical structures. Expression but no oscillations occurs in the glomerular and mitral cell layers of the olfactory bulb, the internal granular layer of the cerebellum, the cornu ammonis and dentate gyrus of the hippocampus, the cerebral and piriform cortices. Expressed in the renal cortex (at protein level). Also found in heart, brain, bladder, lumbar spinal cord, spleen, lung, liver, skeletal muscle and testis.

It localises to the nucleus. It is found in the cytoplasm. Its function is as follows. Transcriptional repressor which forms a core component of the circadian clock. The circadian clock, an internal time-keeping system, regulates various physiological processes through the generation of approximately 24 hour circadian rhythms in gene expression, which are translated into rhythms in metabolism and behavior. It is derived from the Latin roots 'circa' (about) and 'diem' (day) and acts as an important regulator of a wide array of physiological functions including metabolism, sleep, body temperature, blood pressure, endocrine, immune, cardiovascular, and renal function. Consists of two major components: the central clock, residing in the suprachiasmatic nucleus (SCN) of the brain, and the peripheral clocks that are present in nearly every tissue and organ system. Both the central and peripheral clocks can be reset by environmental cues, also known as Zeitgebers (German for 'timegivers'). The predominant Zeitgeber for the central clock is light, which is sensed by retina and signals directly to the SCN. The central clock entrains the peripheral clocks through neuronal and hormonal signals, body temperature and feeding-related cues, aligning all clocks with the external light/dark cycle. Circadian rhythms allow an organism to achieve temporal homeostasis with its environment at the molecular level by regulating gene expression to create a peak of protein expression once every 24 hours to control when a particular physiological process is most active with respect to the solar day. Transcription and translation of core clock components (CLOCK, NPAS2, BMAL1, BMAL2, PER1, PER2, PER3, CRY1 and CRY2) plays a critical role in rhythm generation, whereas delays imposed by post-translational modifications (PTMs) are important for determining the period (tau) of the rhythms (tau refers to the period of a rhythm and is the length, in time, of one complete cycle). A diurnal rhythm is synchronized with the day/night cycle, while the ultradian and infradian rhythms have a period shorter and longer than 24 hours, respectively. Disruptions in the circadian rhythms contribute to the pathology of cardiovascular diseases, cancer, metabolic syndromes and aging. A transcription/translation feedback loop (TTFL) forms the core of the molecular circadian clock mechanism. Transcription factors, CLOCK or NPAS2 and BMAL1 or BMAL2, form the positive limb of the feedback loop, act in the form of a heterodimer and activate the transcription of core clock genes and clock-controlled genes (involved in key metabolic processes), harboring E-box elements (5'-CACGTG-3') within their promoters. The core clock genes: PER1/2/3 and CRY1/2 which are transcriptional repressors form the negative limb of the feedback loop and interact with the CLOCK|NPAS2-BMAL1|BMAL2 heterodimer inhibiting its activity and thereby negatively regulating their own expression. This heterodimer also activates nuclear receptors NR1D1/2 and RORA/B/G, which form a second feedback loop and which activate and repress BMAL1 transcription, respectively. Regulates circadian target genes expression at post-transcriptional levels, but may not be required for the repression at transcriptional level. Controls PER2 protein decay. Represses CRY2 preventing its repression on CLOCK/BMAL1 target genes such as FXYD5 and SCNN1A in kidney and PPARA in liver. Besides its involvement in the maintenance of the circadian clock, has an important function in the regulation of several processes. Participates in the repression of glucocorticoid receptor NR3C1/GR-induced transcriptional activity by reducing the association of NR3C1/GR to glucocorticoid response elements (GREs) by BMAL1:CLOCK. Plays a role in the modulation of the neuroinflammatory state via the regulation of inflammatory mediators release, such as CCL2 and IL6. In spinal astrocytes, negatively regulates the MAPK14/p38 and MAPK8/JNK MAPK cascades as well as the subsequent activation of NFkappaB. Coordinately regulates the expression of multiple genes that are involved in the regulation of renal sodium reabsorption. Can act as gene expression activator in a gene and tissue specific manner, in kidney enhances WNK1 and SLC12A3 expression in collaboration with CLOCK. Modulates hair follicle cycling. Represses the CLOCK-BMAL1 induced transcription of BHLHE40/DEC1. This is Period circadian protein homolog 1 (Per1) from Mus musculus (Mouse).